A 241-amino-acid chain; its full sequence is MASLSGLASALESYRGRDRLIRVLGYCCQLVGGVLVEQCPARSEVGTRLLVVSTQLSHCRTILRLFDDLAMFVYTKQYGLGAQEEDAFVRCVSVLGNLADQLYYPCEHVAWAADARVLHVDSSRWWTLSTTLWALSLLLGVARSLWMLLKLRQRLRSPTAPFTSPLPRGKRRAMEAQMQSEALSLLSNLADLANAVHWLPRGVLWAGRFPPWLVGLMGTISSILSMYQAARAGGQAEATTP.

At 1 to 124 (MASLSGLASA…ARVLHVDSSR (124 aa)) the chain is on the cytoplasmic side. A helical transmembrane segment spans residues 125-149 (WWTLSTTLWALSLLLGVARSLWMLL). Residues 150–211 (KLRQRLRSPT…GVLWAGRFPP (62 aa)) lie on the Lumenal side of the membrane. The helical transmembrane segment at 212-227 (WLVGLMGTISSILSMY) threads the bilayer. The Cytoplasmic portion of the chain corresponds to 228 to 241 (QAARAGGQAEATTP).

The protein belongs to the peroxin-11 family. As to quaternary structure, homodimer. Heterodimer with either PEX11A or PEX11B. Interacts with FIS1.

It localises to the peroxisome membrane. Functionally, promotes membrane protrusion and elongation on the peroxisomal surface. The protein is Peroxisomal membrane protein 11C (PEX11G) of Homo sapiens (Human).